The chain runs to 591 residues: Ferric-chelate reductase 1 (591 aa).

Residues 6 to 26 form a helical membrane-spanning segment; the sequence is FTVSAFILLLHVSFVANYPSG. The Reelin domain occupies 13 to 179; that stretch reads LLLHVSFVAN…FTTPEATIAP (167 aa). N-linked (GlcNAc...) asparagine glycans are attached at residues N50, N85, N308, N321, and N353. The 116-residue stretch at 216-331 folds into the DOMON domain; the sequence is ERACVLLSFT…ASYYIFVADG (116 aa). The Cytochrome b561 domain maps to 335–533; that stretch reads DGRIHKHSQQ…VGTEIILEIH (199 aa). The helical transmembrane segment at 372-392 threads the bilayer; that stretch reads VHGALMFVAWMTTVSVGVLIA. H373 and H413 together coordinate heme b. The next 2 membrane-spanning stretches (helical) occupy residues 416–436 and 445–465; these read LMLTTSALTFIAFLLPFIYRG and HPYLGFIVMVLAVLQLLLAAF. 2 residues coordinate heme b: H445 and H481. 3 helical membrane-spanning segments follow: residues 490–510, 514–534, and 568–588; these read IIAVAAMFLGMDLPGLNLPGP, YAMIGFVAWHVGTEIILEIHA, and VVLAIYVCGNLTFLTMFLSAI.

It belongs to the FRRS1 family. The cofactor is heme b.

The protein localises to the membrane. In terms of biological role, ferric-chelate reductases reduce Fe(3+) to Fe(2+) before its transport from the endosome to the cytoplasm. The chain is Ferric-chelate reductase 1 (FRRS1) from Bos taurus (Bovine).